The sequence spans 132 residues: Small ribosomal subunit protein uS8 (132 aa).

It belongs to the universal ribosomal protein uS8 family. Part of the 30S ribosomal subunit. Contacts proteins S5 and S12.

One of the primary rRNA binding proteins, it binds directly to 16S rRNA central domain where it helps coordinate assembly of the platform of the 30S subunit. The sequence is that of Small ribosomal subunit protein uS8 from Mycobacterium marinum (strain ATCC BAA-535 / M).